A 338-amino-acid chain; its full sequence is O-methyltransferase 4 (338 aa).

S-adenosyl-L-methionine is bound by residues G184, D207, N230, F231, K244, and R245. The Proton acceptor role is filled by H248.

The protein belongs to the class I-like SAM-binding methyltransferase superfamily. Cation-independent O-methyltransferase family. COMT subfamily.

It carries out the reaction (3,5-dichloro-2,4,6-trihydroxyphenyl)hexan-1-one + S-adenosyl-L-methionine = 1-(3,5-dichloro-2,6-dihydroxy-4-methoxyphenyl)hexan-1-one + S-adenosyl-L-homocysteine + H(+). This Dictyostelium discoideum (Social amoeba) protein is O-methyltransferase 4 (omt4).